The following is a 320-amino-acid chain: BTB and MATH domain-containing protein 36 (320 aa).

The region spanning 7-136 is the MATH domain; that stretch reads KGSIRFEIQN…DKHAVLEVQI (130 aa). A BTB domain is found at 160 to 227; sequence TDVVLVLEGK…IYPTHMLINS (68 aa).

This Caenorhabditis elegans protein is BTB and MATH domain-containing protein 36 (bath-36).